A 295-amino-acid chain; its full sequence is Protoheme IX farnesyltransferase (295 aa).

Helical transmembrane passes span Ile-9–Ala-29, Phe-36–Phe-56, Leu-80–Leu-100, Leu-108–Leu-128, Gly-135–Ser-155, Leu-163–Phe-183, Ile-209–Ala-229, Gly-230–Lys-250, and Phe-265–Val-285.

This sequence belongs to the UbiA prenyltransferase family. Protoheme IX farnesyltransferase subfamily.

The protein resides in the cell inner membrane. The catalysed reaction is heme b + (2E,6E)-farnesyl diphosphate + H2O = Fe(II)-heme o + diphosphate. Its pathway is porphyrin-containing compound metabolism; heme O biosynthesis; heme O from protoheme: step 1/1. Its function is as follows. Converts heme B (protoheme IX) to heme O by substitution of the vinyl group on carbon 2 of heme B porphyrin ring with a hydroxyethyl farnesyl side group. The chain is Protoheme IX farnesyltransferase from Pseudomonas syringae pv. syringae (strain B728a).